Reading from the N-terminus, the 233-residue chain is MITTRTARQCGQADYGWLQARYTFSFGHYFDPKLLGYASLRVLNQEVLAPGAAFQPRTYPKVDILNVILDGEAEYRDSEGNHVQASAGEALLLSTQPGVSYSEHNLSKDKPLTRMQLWLDACPQRENPLIQKLALNMGKQHLIASPEGAMGSLQLRQQVWLHHIVLDKGESANFQLHGPRTYLQSIHGKFHALTHHEEKAALTCGDGAFIRDEANITLVADSPLRALLIDLPV.

Belongs to the pirin family. As to quaternary structure, monomer.

It is found in the cytoplasm. Its function is as follows. Does not have quercetin 2,3-dioxygenase activity. The sequence is that of Pirin-like protein YhaK (yhaK) from Escherichia coli O157:H7.